Reading from the N-terminus, the 285-residue chain is MTQIIDGKALAAKLQGQLAEKTAKLKEETALVPGLVVILVGDNPASQVYVRNKERSALAAGSRSEVVRVPETITQEELLDLIAKYNQDPAWHGILVQLPLPKHIDEEAVLLAIDPEKDVDGFHPLNMGRLWSGHPVMIPSTPAGIMEMFHEYGIDLEGKNAVVIGRSNIVGKPMAQLLLAKNATVTLTHSRTHNLAKVAAKADILVVAIGRAKFVTADFVKPGAVVIDVGMNRDENGKLCGDVDYEAVAPLASHITPVPGGVGPMTITMLMEQTYQAALRTLDRK.

NADP(+) is bound by residues 165-167 and S190; that span reads GRS.

It belongs to the tetrahydrofolate dehydrogenase/cyclohydrolase family. In terms of assembly, homodimer.

The catalysed reaction is (6R)-5,10-methylene-5,6,7,8-tetrahydrofolate + NADP(+) = (6R)-5,10-methenyltetrahydrofolate + NADPH. It carries out the reaction (6R)-5,10-methenyltetrahydrofolate + H2O = (6R)-10-formyltetrahydrofolate + H(+). It participates in one-carbon metabolism; tetrahydrofolate interconversion. Catalyzes the oxidation of 5,10-methylenetetrahydrofolate to 5,10-methenyltetrahydrofolate and then the hydrolysis of 5,10-methenyltetrahydrofolate to 10-formyltetrahydrofolate. The sequence is that of Bifunctional protein FolD from Streptococcus pneumoniae (strain ATCC BAA-255 / R6).